The following is an 874-amino-acid chain: Pentatricopeptide repeat-containing protein At2g17140 (874 aa).

PPR repeat units lie at residues 111–145 (SVYL…GIAP), 146–180 (QTYT…GCKP), 181–215 (NEFT…GVLP), 216–250 (NKVI…GLVP), 251–285 (DIVT…EYLG), 290–320 (NSIT…IREN), 325–359 (SLQS…GIGP), 360–394 (SIYS…GVCP), 395–429 (DAVT…NCLP), 430–464 (NAYT…GYGL), 465–499 (DTVT…GSAA), 523–557 (DLIT…KLQP), 558–592 (DSVA…GCHK), 593–627 (SLET…GISP), 628–662 (NICT…NIAP), 663–693 (NVFS…AVSI), 697–731 (KEGL…GFEL), 732–766 (GTFL…GYGF), and 767–797 (DPAA…MMEM).

Belongs to the PPR family. P subfamily.

In Arabidopsis thaliana (Mouse-ear cress), this protein is Pentatricopeptide repeat-containing protein At2g17140.